The chain runs to 189 residues: Ras-like protein rasC (189 aa).

Glycine 11–serine 18 contributes to the GTP binding site. An Effector region motif is present at residues tyrosine 33–tyrosine 41. GTP-binding positions include aspartate 58 to glutamine 62 and asparagine 117 to aspartate 120. Cysteine methyl ester is present on cysteine 186. Cysteine 186 carries the S-geranylgeranyl cysteine lipid modification. The propeptide at isoleucine 187 to leucine 189 is removed in mature form.

It belongs to the small GTPase superfamily. Ras family.

Its subcellular location is the cell membrane. The enzyme catalyses GTP + H2O = GDP + phosphate + H(+). Alternates between an inactive form bound to GDP and an active form bound to GTP. Activated by a guanine nucleotide-exchange factor (GEF) and inactivated by a GTPase-activating protein (GAP). Ras proteins bind GDP/GTP and possess intrinsic GTPase activity. This chain is Ras-like protein rasC (rasC), found in Dictyostelium discoideum (Social amoeba).